A 489-amino-acid polypeptide reads, in one-letter code: MQFHSDKQHLDSKTDIDFKPNSPRSLQNRNTKNLSLDIAALHPLMEFSSPSQDVPGSVKFPSPTPLNLFMKPKPIVLEKCPPKVSPRPTPPSLSMRRSEASIYTLPTSLKNRTVSPSVYTKSSTVSSISKLSSSSPLSSFSEKPHLNRVHSLSVKTKDLKLKGIRGRSQTISGLETSTPISSTREGTLDSTDVNRFSNQKNMQTTLIFPEEDSDLNIDMVHAEIYQRTVYLDGPLLVLPPNLYLYSEPKLEDILSFDLVINVAKEIPNLEFLIPPEMAHKIKYYHIEWTHTSKIVKDLSRLTRIIHTAHSQGKKILVHCQCGVSRSASLIVAYIMRYYGLSLNDAYNKLKGVAKDISPNMGLIFQLMEWGTMLSKNSPGEEGETVHMPEEDDIGNNEVSSTTKSYSSASFRSFPMVTNLSSSPNDSSVNSSEVTPRTPATLTGARTALATERGEDDEHCKSLSQPADSLEASVDNESISTAPEQMMFLP.

Residues 1-18 (MQFHSDKQHLDSKTDIDF) are compositionally biased toward basic and acidic residues. The tract at residues 1–30 (MQFHSDKQHLDSKTDIDFKPNSPRSLQNRN) is disordered. S22, S98, and S151 each carry phosphoserine. T178 is modified (phosphothreonine). The Tyrosine-protein phosphatase domain occupies 233-375 (GPLLVLPPNL…LMEWGTMLSK (143 aa)). The Phosphocysteine intermediate role is filled by C319. 2 disordered regions span residues 375–401 (KNSP…VSST) and 419–489 (LSSS…MFLP). A compositionally biased stretch (low complexity) spans 419–450 (LSSSPNDSSVNSSEVTPRTPATLTGARTALAT). Residues 451-460 (ERGEDDEHCK) show a composition bias toward basic and acidic residues.

This sequence belongs to the protein-tyrosine phosphatase family. Non-receptor class dual specificity subfamily.

The catalysed reaction is O-phospho-L-tyrosyl-[protein] + H2O = L-tyrosyl-[protein] + phosphate. Functionally, dual specificity phosphatase that dephosphorylates MAP kinase FUS3 on both a Tyr and a Ser or Thr. Has a role in adaptation to pheromone. This Saccharomyces cerevisiae (strain ATCC 204508 / S288c) (Baker's yeast) protein is Tyrosine-protein phosphatase MSG5 (MSG5).